The sequence spans 854 residues: DNA gyrase subunit A (854 aa).

The region spanning 42 to 510 is the Topo IIA-type catalytic domain; that stretch reads LPEVRDGLKP…ADGQVSDEDL (469 aa). Tyr-129 (O-(5'-phospho-DNA)-tyrosine intermediate) is an active-site residue. Residues 537–543 carry the GyrA-box motif; it reads QKRGGKG.

The protein belongs to the type II topoisomerase GyrA/ParC subunit family. Heterotetramer, composed of two GyrA and two GyrB chains. In the heterotetramer, GyrA contains the active site tyrosine that forms a transient covalent intermediate with DNA, while GyrB binds cofactors and catalyzes ATP hydrolysis.

Its subcellular location is the cytoplasm. It carries out the reaction ATP-dependent breakage, passage and rejoining of double-stranded DNA.. With respect to regulation, DNA supercoiling is inhibited by the coumarin antibiotic novobiocin. Also inhibited by the fluoroquinolones ciprofloxacin and moxifloxacin. In terms of biological role, a type II topoisomerase that negatively supercoils closed circular double-stranded (ds) DNA in an ATP-dependent manner to modulate DNA topology and maintain chromosomes in an underwound state; also catalyzes the interconversion of other topological isomers of double-stranded DNA rings, including catenanes. At comparable concentrations has a stronger decatenation activity than E.coli, which is inhibited by ciprofloxacin and novobiocin. Cleaves dsDNA at the sequence 5'-AT/GGCC-3', leaving a 4 base overhang. Relaxes negatively supercoiled DNA in an ATP-independent manner. Negative supercoiling favors strand separation, and DNA replication, transcription, recombination and repair, all of which involve strand separation. Type II topoisomerases break and join 2 DNA strands simultaneously in an ATP-dependent manner. In Mycolicibacterium smegmatis (Mycobacterium smegmatis), this protein is DNA gyrase subunit A.